The sequence spans 598 residues: Fructan 6-exohydrolase (598 aa).

Residues 1-30 (MAARLPLAACVVAFHLCLLLSSLVRSPSTA) form the signal peptide. The active site involves D65. Residues N93, N288, and N351 are each glycosylated (N-linked (GlcNAc...) asparagine). An intrachain disulfide couples C451 to C497. N572 carries N-linked (GlcNAc...) asparagine glycosylation.

This sequence belongs to the glycosyl hydrolase 32 family. As to expression, expressed in leaves, stems, roots and inflorescences. Maximum expression is detected in stems, particularly the penultimate internode.

The catalysed reaction is Hydrolysis of terminal, non-reducing (2-&gt;6)-linked beta-D-fructofuranose residues in fructans.. Its activity is regulated as follows. Not inhibited by sucrose. Hydrolyzes levan-type beta-(2-&gt;6)-linked fructans to fructose, but not inulin-type beta-(2-&gt;1)-linked fructans. This is Fructan 6-exohydrolase from Triticum aestivum (Wheat).